The sequence spans 860 residues: MNTALDDLHGDLVTLEDNEIINNSDHSSSHSTSHEEEDEEEDDTEDIELIEKDGNKILSSRIHPEDEIINDGLNIWIPVQMLKKNIAKFWSHFLAIEKKLTKVKCKHCGEILTRSDASLTKTFRSHLKTKHNISANKNFYSMNFTVGDSNLKNNTSSTEITRRHGYDSLTFNSDQSFKCFDIGKLQSSNYLSISQLVAIVIASENLPLNFFENVSFKSLLSKFHRIPPLTTNIIEESIIGLSKSIDELIRRSISRNDTQLPFTIHLSDSKESNQPLYLKYSREIRAQLSNLDLSHLISVNFTELAGKRSLFSLQLFDNTNKVSKGLPLSIFVRKTTDIDISVWQEQLNNLYSKYPGLQKSVISITLPQSHYTMVLENRNSHNFTFHSGSVREIKYHTCIVSELLHCFLQPLFNVPTESMLSSFSVAKENHSGGSLLDSLIDFSHIDLSSTILGKICCLIEEVNLNDSLKSDFLLYCQNYTQPNCNELTSILSCNCDRFSALKSILEKFANLVPFFKSINSHLENESLSESDFRLINTVEETLRTFEQSIEYFASSAPLKFTHTLVFIIKFELYLTEIIRSFKFTKSKKPFEKILARLLKVKDLYLLDDVNLIGAFLYPSIFQSKSLLNEIFGTTSVNKIVHNMTKIVLRYLKNFINITNFRSSNSGGESGRNSGNNLLSDYEAIFMKESRDVELLCNTKLTAPLTEDSLLVQIIRDDLLRYVNRIAHELPNAYHDYLNDNDISFDGSHFTKHELSEENDSNSGEWCLNPMEETFDIHIPISDSIWNNYISSKNKIEVIDILLQLLSVNSTSSIRSELSSLTANQDFSTKLSEETIKIKLLNSQFNLEKINFHSGSIFDAC.

The disordered stretch occupies residues 19–45 (EIINNSDHSSSHSTSHEEEDEEEDDTE). The span at 20–31 (IINNSDHSSSHS) shows a compositional bias: low complexity. The segment covering 35-45 (EEEDEEEDDTE) has biased composition (acidic residues). The BED-type zinc-finger motif lies at 84-138 (KNIAKFWSHFLAIEKKLTKVKCKHCGEILTRSDASLTKTFRSHLKTKHNISANKN). The Zn(2+) site is built by Cys-105, Cys-108, His-126, and His-131.

The protein belongs to the VID22 family.

It localises to the nucleus. Its function is as follows. Involved in vacuolar processing and morphology. This chain is Late endosome and vacuole interface protein 11 (ENV11), found in Saccharomyces cerevisiae (strain ATCC 204508 / S288c) (Baker's yeast).